Here is a 1212-residue protein sequence, read N- to C-terminus: uncharacterized protein (1212 aa).

Residues 1-31 (MASIQTKLVSQPQTQQPLQNGFFNNYQQNIY) show a composition bias toward polar residues. 7 disordered regions span residues 1 to 70 (MASI…HLQQ), 119 to 169 (PQAQ…FGTN), 211 to 231 (SLNNSLNSSGNNSTLNTSNNN), 248 to 374 (INIG…NNNK), 655 to 681 (QQQPQQLNQNPPNQQLPQQPNQITQQQ), 935 to 957 (NQNQNNNNNNNNNNNNNINCNNA), and 973 to 1125 (QLQP…QQLQ). Low complexity-rich tracts occupy residues 48–70 (PQQQPILPQQPQPQSQQPLHLQQ) and 119–163 (PQAQ…NNNN). Residues 256–275 (NNSNTNNVNNINTNNTNNNN) are compositionally biased toward low complexity. Polar residues-rich tracts occupy residues 276-285 (KSGSIDQFGS) and 292-317 (YVNSSSNSAIPTPPTNQTNGSNSHSP). Positions 322 to 340 (INSNININSNLQSPQNIQQ) are enriched in low complexity. A compositionally biased stretch (polar residues) spans 341–351 (TILSPNISPNH). Residues 352-373 (NNNNNNNNNNNNNNNNNNNNNN) are compositionally biased toward low complexity. 2 stretches are compositionally biased toward low complexity: residues 998 to 1022 (NSVNNNINNNFINNNSFVNNNNNNN) and 1037 to 1125 (QNNN…QQLQ).

This is an uncharacterized protein from Dictyostelium discoideum (Social amoeba).